A 345-amino-acid chain; its full sequence is MDYKSAGVDVEAGRAFVQRIKASVEATHRPEVVGGLGGFGGLMRLPTGLRKPLLVSGTDGVGTKLELAQNHHCHHGVGIDLVAMCVNDVITSGAAPLFFLDYMATGALSPAAMAEVVEGIADGCRQSGCALLGGETAEMPGFYPQGRYDLAGFCVAVVEEDDLIDGRSISPGDQIIGIASSGVHSNGFSLVRKVLEKAGINENSQYGPDNRRLLNDLLAPTTLYASLVQELLSNAIKIHGMAHITGGGLPENLPRCLPEGMTAKIEAEAWPRSPLFQWLQSAGAIPERDLWHTFNMGIGFCLVVPKEAEQTALDVCHLNNHQAWVIGEVLKTPPGEHSALQGLPS.

The protein belongs to the AIR synthase family.

The protein resides in the cytoplasm. The catalysed reaction is 2-formamido-N(1)-(5-O-phospho-beta-D-ribosyl)acetamidine + ATP = 5-amino-1-(5-phospho-beta-D-ribosyl)imidazole + ADP + phosphate + H(+). The protein operates within purine metabolism; IMP biosynthesis via de novo pathway; 5-amino-1-(5-phospho-D-ribosyl)imidazole from N(2)-formyl-N(1)-(5-phospho-D-ribosyl)glycinamide: step 2/2. The chain is Phosphoribosylformylglycinamidine cyclo-ligase from Synechococcus sp. (strain CC9902).